A 379-amino-acid polypeptide reads, in one-letter code: UDP-4-amino-4-deoxy-L-arabinose--oxoglutarate aminotransferase (379 aa).

Lys182 is subject to N6-(pyridoxal phosphate)lysine.

Belongs to the DegT/DnrJ/EryC1 family. ArnB subfamily. Homodimer. Requires pyridoxal 5'-phosphate as cofactor.

It catalyses the reaction UDP-4-amino-4-deoxy-beta-L-arabinose + 2-oxoglutarate = UDP-beta-L-threo-pentopyranos-4-ulose + L-glutamate. It participates in nucleotide-sugar biosynthesis; UDP-4-deoxy-4-formamido-beta-L-arabinose biosynthesis; UDP-4-deoxy-4-formamido-beta-L-arabinose from UDP-alpha-D-glucuronate: step 2/3. The protein operates within bacterial outer membrane biogenesis; lipopolysaccharide biosynthesis. Catalyzes the conversion of UDP-4-keto-arabinose (UDP-Ara4O) to UDP-4-amino-4-deoxy-L-arabinose (UDP-L-Ara4N). The modified arabinose is attached to lipid A and is required for resistance to polymyxin and cationic antimicrobial peptides. In Salmonella dublin (strain CT_02021853), this protein is UDP-4-amino-4-deoxy-L-arabinose--oxoglutarate aminotransferase.